A 219-amino-acid polypeptide reads, in one-letter code: uncharacterized protein (219 aa).

2 consecutive transmembrane segments (helical) span residues 81 to 101 and 168 to 188; these read VVKW…NYLI and PIME…TALV.

The protein resides in the membrane. This is an uncharacterized protein from Saccharomyces cerevisiae (strain ATCC 204508 / S288c) (Baker's yeast).